A 179-amino-acid polypeptide reads, in one-letter code: CASP-like protein 5A2 (179 aa).

The segment at 1–24 is disordered; the sequence is MNVSHASVHPVEDPPAAATEVENP. At 1–38 the chain is on the cytoplasmic side; it reads MNVSHASVHPVEDPPAAATEVENPPRVRMDDMEGMPGT. A helical membrane pass occupies residues 39 to 59; that stretch reads LLGLALRFFQFLFAAAALCVM. Topologically, residues 60-70 are extracellular; it reads ASTSDFPSVTA. Residues 71–91 traverse the membrane as a helical segment; sequence FCYLVAATGLQSLWSLALAMV. At 92 to 115 the chain is on the cytoplasmic side; that stretch reads DVYAIMVKRSLQNRRLVSLFAIGD. Residues 116–136 form a helical membrane-spanning segment; it reads GVTSTLTFAAACASAGITVLI. At 137–155 the chain is on the extracellular side; the sequence is DNDLNSCAQNHCVQFETST. The chain crosses the membrane as a helical span at residues 156–176; sequence ALAFISWFAALPSFLFNFWSL. Residues 177 to 179 are Cytoplasmic-facing; the sequence is ASR.

The protein belongs to the Casparian strip membrane proteins (CASP) family. In terms of assembly, homodimer and heterodimers.

The protein resides in the cell membrane. The protein is CASP-like protein 5A2 of Arabidopsis thaliana (Mouse-ear cress).